Here is a 155-residue protein sequence, read N- to C-terminus: Ribosomal RNA large subunit methyltransferase H (155 aa).

Residues Leu-72, Gly-103, and 122-127 (LSALTL) contribute to the S-adenosyl-L-methionine site.

Belongs to the RNA methyltransferase RlmH family. Homodimer.

It is found in the cytoplasm. It catalyses the reaction pseudouridine(1915) in 23S rRNA + S-adenosyl-L-methionine = N(3)-methylpseudouridine(1915) in 23S rRNA + S-adenosyl-L-homocysteine + H(+). Its function is as follows. Specifically methylates the pseudouridine at position 1915 (m3Psi1915) in 23S rRNA. The sequence is that of Ribosomal RNA large subunit methyltransferase H from Enterobacter sp. (strain 638).